A 731-amino-acid polypeptide reads, in one-letter code: Actin filament-associated protein 1 (731 aa).

Methionine 1 is modified (N-acetylmethionine). The segment at 56–90 is disordered; sequence NNLPAPPQMPLPEIPQPWLPPDSGPPPLPTSSLPE. A compositionally biased stretch (pro residues) spans 59 to 84; it reads PAPPQMPLPEIPQPWLPPDSGPPPLP. The short motif at 70 to 73 is the SH3-binding element; that stretch reads PQPW. Positions 93–96 match the SH2-binding 1 motif; that stretch reads YEEA. The interval 118-139 is disordered; it reads SSSYESYDEEEEDGKGKKTRHQ. Residues 152–248 enclose the PH 1 domain; it reads DAKICAFLLR…WLKVIKEAYS (97 aa). Residues 252 to 318 form a disordered region; the sequence is GPVDPECSPP…SKSEAKGTVS (67 aa). The span at 271-284 shows a compositional bias: basic and acidic residues; that stretch reads AELEKKLSSERPSS. 2 positions are modified to phosphoserine: serine 283 and serine 284. The 95-residue stretch at 348–442 folds into the PH 2 domain; sequence DVPTCGYLNV…WIGILLAETG (95 aa). The SH2-binding 2 motif lies at 452 to 457; that stretch reads YDYIDV. The segment at 513–544 is disordered; that stretch reads KNKKPPASSNGVPVKGKAPSSQQKKVETAGGV. Serine 549 is subject to Phosphoserine. A coiled-coil region spans residues 558–649; that stretch reads KNRVEADAKR…VKESLKKALA (92 aa). Residues 595 to 638 form an interaction with F-actin region; it reads DLRAAIEVNAGRKTQAALEDKLKRLEEECKQREAERVSLELELT. Residues 658–731 form a disordered region; it reads IEPRSGTSSP…AKEWELKNGT (74 aa). Serine 665, serine 666, and serine 669 each carry phosphoserine. Position 676 is a phosphothreonine (threonine 676). The span at 678 to 687 shows a compositional bias: polar residues; the sequence is ENSPISSCDT. Phosphoserine occurs at positions 680 and 688. Over residues 721–731 the composition is skewed to basic and acidic residues; the sequence is KAKEWELKNGT.

Monomer and homomultimer. Interacts via its C-terminus with F-actin; probably involving AFAP1 multimers. Interacts with activated SRC SH3-SH2 domains. Interacts via its PH 1 domain with PRKCA, PRKCB and PRKCI. Post-translationally, phosphorylated on tyrosine residues by SRC.

It is found in the cytoplasm. It localises to the cytoskeleton. The protein localises to the stress fiber. Functionally, can cross-link actin filaments into both network and bundle structures. May modulate changes in actin filament integrity and induce lamellipodia formation. May function as an adapter molecule that links other proteins, such as SRC and PKC to the actin cytoskeleton. The protein is Actin filament-associated protein 1 (Afap1) of Mus musculus (Mouse).